The primary structure comprises 416 residues: MAGIISSMTVPDLLKAGWRERIALLAETLQTWPWLDTLKTLRQRFREDRLGLTASSLTFTTTIALVPLATVTLAIFSAFPMFGQFQGALEKYFIQSLVPDGIAKPVLGALTQFAGKAHRLGTVGLVVLVLTALALMLTIDRTLNAIWRVRKPRPIAQRVLVYWAAATLGPLLLGVSLTLTSYAISASRGVVGAMPGSLSVLLNALEFGLLAAAMAGLFHYVPNTEVRWRHALAGGLFVSAGFELAKKGLAWYLAQVPTYSTIYGAFATVPIFLIWLYLGWVIVLLGAVIAAYAPSLSMHIVRQPNTPGYRFQAAVQLLRELAAARARGERGLGLVGLASTLRTDPLQIEPSLERLVELDWVGRLDEAGEKRYVLLCDPNTTPAQPLLAALLLDPSPGLRGFWQRARFGEMTLQELI.

6 helical membrane passes run 63-83 (IALV…PMFG), 120-140 (LGTV…LTID), 159-179 (VLVY…SLTL), 198-218 (LSVL…AGLF), 234-256 (GGLF…LAQV), and 271-291 (IFLI…VIAA).

It belongs to the UPF0761 family.

Its subcellular location is the cell inner membrane. The sequence is that of UPF0761 membrane protein Mpe_A1422 from Methylibium petroleiphilum (strain ATCC BAA-1232 / LMG 22953 / PM1).